A 61-amino-acid chain; its full sequence is Conotoxin LiC32 (61 aa).

An N-terminal signal peptide occupies residues 1–22 (MRCVPVFIILLLLSPSAPSVDA). A propeptide spanning residues 23 to 44 (HPKTKDDVPLASFHDDAKRTLQ) is cleaved from the precursor. Cys60 bears the Cysteine amide mark.

This sequence belongs to the conotoxin T superfamily. In terms of processing, contains 2 disulfide bonds that can be either 'C1-C3, C2-C4' or 'C1-C4, C2-C3', since these disulfide connectivities have been observed for conotoxins with cysteine framework V (for examples, see AC P0DQQ7 and AC P81755). As to expression, expressed by the venom duct.

It localises to the secreted. Its function is as follows. Has the ability to interact with the G-protein coupled somatostatin type 3 receptor (SSTR3). The ability was measured in competition binding experiments and the constant of inhibition (Ki) has been evaluated to be 3.5 uM. This chain is Conotoxin LiC32, found in Conus lividus (Livid cone).